The primary structure comprises 170 residues: Adenine phosphoribosyltransferase (170 aa).

This sequence belongs to the purine/pyrimidine phosphoribosyltransferase family. Homodimer.

The protein localises to the cytoplasm. It catalyses the reaction AMP + diphosphate = 5-phospho-alpha-D-ribose 1-diphosphate + adenine. It participates in purine metabolism; AMP biosynthesis via salvage pathway; AMP from adenine: step 1/1. Catalyzes a salvage reaction resulting in the formation of AMP, that is energically less costly than de novo synthesis. In Cyanothece sp. (strain PCC 7425 / ATCC 29141), this protein is Adenine phosphoribosyltransferase.